The chain runs to 99 residues: Transmembrane protein 14A (99 aa).

The next 3 helical transmembrane spans lie at 1-21 (MDLIGFGYAALVTFGSILGYK), 24-44 (GGVLSLIAGLFVGFLAGYGAY), and 79-99 (PAGLVAGLSLLMILRLVLLLL).

Belongs to the TMEM14 family.

It is found in the mitochondrion membrane. It localises to the endoplasmic reticulum membrane. Its function is as follows. Inhibits apoptosis via negative regulation of the mitochondrial outer membrane permeabilization involved in apoptotic signaling pathway. This chain is Transmembrane protein 14A (TMEM14A), found in Bos taurus (Bovine).